The chain runs to 483 residues: Altronate oxidoreductase (483 aa).

Residue 18–29 (IIQFGEGNFLRA) coordinates NAD(+).

The protein belongs to the mannitol dehydrogenase family. UxaB subfamily.

It carries out the reaction D-altronate + NAD(+) = keto-D-tagaturonate + NADH + H(+). It functions in the pathway carbohydrate metabolism; pentose and glucuronate interconversion. The protein is Altronate oxidoreductase of Klebsiella pneumoniae subsp. pneumoniae (strain ATCC 700721 / MGH 78578).